Here is a 1413-residue protein sequence, read N- to C-terminus: DNA-directed RNA polymerase subunit beta' (1413 aa).

Zn(2+) contacts are provided by Cys-70, Cys-72, Cys-85, and Cys-88. 3 residues coordinate Mg(2+): Asp-460, Asp-462, and Asp-464. Zn(2+) contacts are provided by Cys-819, Cys-893, Cys-900, and Cys-903. The interval 1392–1413 (EEAFDFGTPSAPAEEPQHPAAE) is disordered.

This sequence belongs to the RNA polymerase beta' chain family. In terms of assembly, the RNAP catalytic core consists of 2 alpha, 1 beta, 1 beta' and 1 omega subunit. When a sigma factor is associated with the core the holoenzyme is formed, which can initiate transcription. The cofactor is Mg(2+). Zn(2+) serves as cofactor.

It carries out the reaction RNA(n) + a ribonucleoside 5'-triphosphate = RNA(n+1) + diphosphate. Functionally, DNA-dependent RNA polymerase catalyzes the transcription of DNA into RNA using the four ribonucleoside triphosphates as substrates. This chain is DNA-directed RNA polymerase subunit beta', found in Burkholderia orbicola (strain MC0-3).